The chain runs to 691 residues: Elongation factor G (691 aa).

A tr-type G domain is found at 8-283 (KKVRNIGIAA…AVVAYLPAPD (276 aa)). GTP is bound by residues 17–24 (AHIDAGKT), 81–85 (DTPGH), and 135–138 (NKMD).

Belongs to the TRAFAC class translation factor GTPase superfamily. Classic translation factor GTPase family. EF-G/EF-2 subfamily.

The protein localises to the cytoplasm. Catalyzes the GTP-dependent ribosomal translocation step during translation elongation. During this step, the ribosome changes from the pre-translocational (PRE) to the post-translocational (POST) state as the newly formed A-site-bound peptidyl-tRNA and P-site-bound deacylated tRNA move to the P and E sites, respectively. Catalyzes the coordinated movement of the two tRNA molecules, the mRNA and conformational changes in the ribosome. This is Elongation factor G from Campylobacter jejuni subsp. doylei (strain ATCC BAA-1458 / RM4099 / 269.97).